Consider the following 254-residue polypeptide: Large ribosomal subunit protein uL4 (254 aa).

The tract at residues 45–70 (PWGNDPEAGKRTSAKGWGSGRGTARV) is disordered.

Belongs to the universal ribosomal protein uL4 family. Part of the 50S ribosomal subunit.

In terms of biological role, one of the primary rRNA binding proteins, this protein initially binds near the 5'-end of the 23S rRNA. It is important during the early stages of 50S assembly. It makes multiple contacts with different domains of the 23S rRNA in the assembled 50S subunit and ribosome. Its function is as follows. Forms part of the polypeptide exit tunnel. This chain is Large ribosomal subunit protein uL4, found in Methanobrevibacter smithii (strain ATCC 35061 / DSM 861 / OCM 144 / PS).